The sequence spans 225 residues: MNGARIAFWPKKEQHQLFNLSFSAMMLALALIASFVSHFISIPFLSALKLTIDISSVFLIACAFFVSYSWALVITVALSLCSFIWDGNNWIGILTLTIANFAIVSFTRLYFHIFAQIKLRWLWVFSLATLSNTLLLTTLNGLLITPLYWYWFGYVPTANFVEVAKIYNKTPYFHFFLFGVPNYWGGIFALYSLFNVIKFTLVSLIGVPVMRAFQKFYWKKAQIVY.

6 helical membrane-spanning segments follow: residues 25–45 (MMLA…IPFL), 57–77 (VFLI…ITVA), 83–103 (FIWD…NFAI), 109–129 (LYFH…SLAT), 135–155 (LLTT…FGYV), and 187–207 (IFAL…LIGV).

It localises to the cell membrane. This is an uncharacterized protein from Mycoplasma pneumoniae (strain ATCC 29342 / M129 / Subtype 1) (Mycoplasmoides pneumoniae).